The sequence spans 138 residues: Putative pre-16S rRNA nuclease (138 aa).

The protein belongs to the YqgF nuclease family.

The protein localises to the cytoplasm. Could be a nuclease involved in processing of the 5'-end of pre-16S rRNA. This is Putative pre-16S rRNA nuclease from Cronobacter sakazakii (strain ATCC BAA-894) (Enterobacter sakazakii).